Consider the following 278-residue polypeptide: tRNA (guanine-N(7)-)-methyltransferase (278 aa).

S-adenosyl-L-methionine-binding positions include Gly95, 118-119 (EI), 153-154 (NA), and Cys173. The active site involves Asp176. 251 to 253 (TEE) provides a ligand contact to S-adenosyl-L-methionine.

This sequence belongs to the class I-like SAM-binding methyltransferase superfamily. TrmB family. Forms a complex with TRM82.

The protein localises to the nucleus. The enzyme catalyses guanosine(46) in tRNA + S-adenosyl-L-methionine = N(7)-methylguanosine(46) in tRNA + S-adenosyl-L-homocysteine. Its pathway is tRNA modification; N(7)-methylguanine-tRNA biosynthesis. Its function is as follows. Catalyzes the formation of N(7)-methylguanine at position 46 (m7G46) in tRNA. In Kluyveromyces lactis (strain ATCC 8585 / CBS 2359 / DSM 70799 / NBRC 1267 / NRRL Y-1140 / WM37) (Yeast), this protein is tRNA (guanine-N(7)-)-methyltransferase.